The primary structure comprises 104 residues: Large ribosomal subunit protein bL21 (104 aa).

The protein belongs to the bacterial ribosomal protein bL21 family. In terms of assembly, part of the 50S ribosomal subunit. Contacts protein L20.

Functionally, this protein binds to 23S rRNA in the presence of protein L20. The protein is Large ribosomal subunit protein bL21 of Endomicrobium trichonymphae.